The following is a 557-amino-acid chain: Copine-6 (557 aa).

C2 domains follow at residues 1–127 (MSDP…TKPL) and 134–263 (NAGK…MQWD). Residues aspartate 167, aspartate 173, aspartate 229, aspartate 231, and aspartate 237 each coordinate Ca(2+). Residues 244 to 303 (STFQEMQEGTANPGQEMQWDCINPKYRDKKKHYKSSGTVVLAQCTVEKVHTFLDYIMGGC) form a linker region region. The VWFA domain maps to 306-526 (SFTVAIDFTA…ALAKCVLAEV (221 aa)).

It belongs to the copine family. As to quaternary structure, interacts (via second C2 domain) with OS9 (via C-terminus); this interaction occurs in a calcium-dependent manner in vitro. May interact with NECAB1. It depends on Ca(2+) as a cofactor.

It localises to the cytoplasm. The protein resides in the cell membrane. The protein localises to the endosome. It is found in the cytoplasmic vesicle. Its subcellular location is the clathrin-coated vesicle. It localises to the perikaryon. The protein resides in the cell projection. The protein localises to the dendrite. Calcium-dependent phospholipid-binding protein that plays a role in calcium-mediated intracellular processes. Binds phospholipid membranes in a calcium-dependent manner. Plays a role in dendrite formation by melanocytes. The sequence is that of Copine-6 from Bos taurus (Bovine).